Consider the following 460-residue polypeptide: SPbeta prophage-derived uncharacterized protein YopQ (460 aa).

The polypeptide is SPbeta prophage-derived uncharacterized protein YopQ (yopQ) (Bacillus subtilis (strain 168)).